Consider the following 459-residue polypeptide: Vacuolar cation/proton exchanger 3 (459 aa).

At 1 to 67 (MGSIVEPWAA…TLKNILSNLQ (67 aa)) the chain is on the cytoplasmic side. A helical membrane pass occupies residues 68–88 (EVILGTKLTLLFLAIPLAILA). The Extracellular segment spans residues 89-95 (NSYNYGR). A helical membrane pass occupies residues 96-116 (PLIFGLSLIGLTPLAERVSFL). The Cytoplasmic segment spans residues 117-129 (TEQLAFYTGPTVG). The chain crosses the membrane as a helical span at residues 130 to 150 (GLLNATCGNATELIIAILALA). The interval 137–172 (GNATELIIAILALANNKVAVVKYSLLGSILSNLLLV) is cation selection. The Extracellular portion of the chain corresponds to 151-161 (NNKVAVVKYSL). The helical transmembrane segment at 162-182 (LGSILSNLLLVLGTSLFFGGI) threads the bilayer. Topologically, residues 183-195 (ANIRREQRFDRKQ) are cytoplasmic. The helical transmembrane segment at 196-216 (ADVNFFLLLMGLLCHLLPLLL) threads the bilayer. Topologically, residues 217–238 (KYAATGEVSTSMINKMSLTLSR) are extracellular. Residues 239 to 259 (TSSIVMLIAYIAYLIFQLWTH) form a helical membrane-spanning segment. Over 260 to 283 (RQLFEAQQDDDDAYDDEVSVEETP) the chain is Cytoplasmic. Residues 284–304 (VIGFWSGFAWLVGMTIVIALL) form a helical membrane-spanning segment. The Extracellular portion of the chain corresponds to 305–327 (SEYVVDTIEDASDSWGLSVSFIS). Residues 328-348 (IILLPIVGNAAEHAGAIIFAF) traverse the membrane as a helical segment. Positions 335-370 (GNAAEHAGAIIFAFKNKLDISLGVALGSATQISLFV) are cation selection. Residues 349–362 (KNKLDISLGVALGS) lie on the Cytoplasmic side of the membrane. The helical transmembrane segment at 363 to 383 (ATQISLFVVPLSVIVAWILGI) threads the bilayer. Residues 384-386 (KMD) are Extracellular-facing. A helical membrane pass occupies residues 387–407 (LNFNILETSSLALAIIITAFT). The Cytoplasmic portion of the chain corresponds to 408-417 (LQDGTSHYMK). Residues 418-438 (GLVLLLCYVIIAACFFVDQIP) traverse the membrane as a helical segment. Topologically, residues 439–459 (QPNDLDVGLQPMNNLGEVFSA) are extracellular.

This sequence belongs to the Ca(2+):cation antiporter (CaCA) (TC 2.A.19) family. Cation/proton exchanger (CAX) subfamily. Expressed in roots, stems and flowers.

It localises to the vacuole membrane. Inhibited by excess of Ca(2+). Vacuolar cation/proton exchanger (CAX). Translocates Ca(2+) and other metal ions into vacuoles using the proton gradient formed by H(+)-ATPase and H(+)-pyrophosphatase. Involved in ion homeostasis in association with CAX1. This Arabidopsis thaliana (Mouse-ear cress) protein is Vacuolar cation/proton exchanger 3 (CAX3).